An 802-amino-acid chain; its full sequence is Leucine--tRNA ligase (802 aa).

The 'HIGH' region motif lies at 40 to 51; that stretch reads PYPSGAGLHVGH. A 'KMSKS' region motif is present at residues 576–580; the sequence is KMSKS. ATP is bound at residue K579.

Belongs to the class-I aminoacyl-tRNA synthetase family.

It is found in the cytoplasm. The enzyme catalyses tRNA(Leu) + L-leucine + ATP = L-leucyl-tRNA(Leu) + AMP + diphosphate. The polypeptide is Leucine--tRNA ligase (Bacillus mycoides (strain KBAB4) (Bacillus weihenstephanensis)).